We begin with the raw amino-acid sequence, 675 residues long: MFKKLFGQLQRIGKALMLPVAILPAAGLLLAIGTAFQGEALQQYLPFIKNGVIQNIANMMTGAGGIIFDNLPIIFALGVAIGLAGGDGVAAIAAFVGFIIMNKTMGAFLNVTPAQLEDPSKGFANVLGIPTLQTGVFGGIIIGALAAWCYNKFYNISLPSYLGFFAGKRFVPIMMATTSFILAFPMAWIWPFIQNGLNAFSTGLLDSNTGLAVFLFGFIKRLLIPFGLHHIFHAPFWFEFGSWKNAAGEIIRGDQRIFIEQIREGVHLTSGKFMQGEFPVMMFGLPAAALAIYQTAKPENKKVVGGLMLSAALTSFLTGITEPLEFSFLFVAPLLFFIHAVLDGLSFLTLYLLNLHLGYTFSGGFIDFVLLGILPNKTPWWLVIPVGLVYAVIYYVVFRFLIVKFNFKTPGREDKQASVANTSASKLPFDVLDAMGGKENIKHLDACITRLRVEVNDKSKVDVEGLKALGASGVLEVGNNMQAIFGPKSDQIKHDMARIMNGDITKPSETTVTEDTSDEPVQLEEVKETDIYAPGTGHIIPLSEVPDKVFSEKMMGDGIGFVPEKGGIVAPFDGTVKTIFPTKHAIGLESDTGIEVLIHIGIDTVKLNGEGFESLVDVNEPVTQGQPLMKINLAYLKEHAPSVVTPVIITNQGDKTLTFDDVDSVDPGKRIMTIK.

The PTS EIIC type-1 domain occupies 3 to 414; it reads KKLFGQLQRI…FNFKTPGRED (412 aa). A run of 11 helical transmembrane segments spans residues 16–36, 59–79, 81–101, 126–146, 173–193, 199–219, 273–293, 303–323, 328–348, 355–375, and 378–398; these read LMLP…GTAF, MMTG…ALGV, IGLA…FIIM, VLGI…GALA, IMMA…WPFI, AFST…FGFI, FMQG…LAIY, VVGG…ITEP, FLFV…LSFL, LHLG…GILP, and TPWW…YVVF. The 82-residue stretch at 425–506 folds into the PTS EIIB type-1 domain; it reads SKLPFDVLDA…ARIMNGDITK (82 aa). C447 serves as the catalytic Phosphocysteine intermediate; for EIIB activity. In terms of domain architecture, PTS EIIA type-1 spans 547–651; sequence DKVFSEKMMG…SVVTPVIITN (105 aa). H599 (tele-phosphohistidine intermediate; for EIIA activity) is an active-site residue.

It localises to the cell membrane. The enzyme catalyses N(pros)-phospho-L-histidyl-[protein] + D-glucose(out) = D-glucose 6-phosphate(in) + L-histidyl-[protein]. Functionally, the phosphoenolpyruvate-dependent sugar phosphotransferase system (sugar PTS), a major carbohydrate active transport system, catalyzes the phosphorylation of incoming sugar substrates concomitantly with their translocation across the cell membrane. This system is involved in glucose transport. The sequence is that of PTS system glucose-specific EIICBA component (ptsG) from Staphylococcus haemolyticus (strain JCSC1435).